The primary structure comprises 91 residues: Small ribosomal subunit protein bS18 (91 aa).

Belongs to the bacterial ribosomal protein bS18 family. In terms of assembly, part of the 30S ribosomal subunit. Forms a tight heterodimer with protein bS6.

In terms of biological role, binds as a heterodimer with protein bS6 to the central domain of the 16S rRNA, where it helps stabilize the platform of the 30S subunit. The polypeptide is Small ribosomal subunit protein bS18 (Thiobacillus denitrificans (strain ATCC 25259 / T1)).